A 411-amino-acid polypeptide reads, in one-letter code: NAD-dependent dihydropyrimidine dehydrogenase subunit PreA (411 aa).

Substrate-binding positions include Asn76 and 134-136; that span reads NFS. Cys137 (nucleophile) is an active-site residue. 201 to 202 provides a ligand contact to substrate; the sequence is NT. 2 consecutive 4Fe-4S ferredoxin-type domains span residues 335–367 and 369–398; these read VYPRINLDKCVGCGRCYISCYDGGHQAMEWSEK and RTPHCNTEKCVGCLLCGHVCPVGCIELGEV. [4Fe-4S] cluster-binding residues include Cys344, Cys347, Cys350, Cys354, Cys378, Cys381, Cys384, and Cys388.

It belongs to the dihydropyrimidine dehydrogenase family. In terms of assembly, heterotetramer of 2 PreA and 2 PreT subunits. [4Fe-4S] cluster is required as a cofactor.

The enzyme catalyses 5,6-dihydrouracil + NAD(+) = uracil + NADH + H(+). The catalysed reaction is 5,6-dihydrothymine + NAD(+) = thymine + NADH + H(+). Functionally, involved in pyrimidine base degradation. Catalyzes physiologically the reduction of uracil to 5,6-dihydrouracil (DHU) by using NADH as a specific cosubstrate. It also catalyzes the reverse reaction and the reduction of thymine to 5,6-dihydrothymine (DHT). The protein is NAD-dependent dihydropyrimidine dehydrogenase subunit PreA (preA) of Escherichia coli O157:H7.